Consider the following 185-residue polypeptide: Elongation factor P (185 aa).

The protein belongs to the elongation factor P family.

It localises to the cytoplasm. Its pathway is protein biosynthesis; polypeptide chain elongation. Its function is as follows. Involved in peptide bond synthesis. Stimulates efficient translation and peptide-bond synthesis on native or reconstituted 70S ribosomes in vitro. Probably functions indirectly by altering the affinity of the ribosome for aminoacyl-tRNA, thus increasing their reactivity as acceptors for peptidyl transferase. This Geobacillus sp. (strain WCH70) protein is Elongation factor P.